The sequence spans 322 residues: F-box protein At2g16300 (322 aa).

Positions 2-50 constitute an F-box domain; it reads ADWSLLPNDLLELIVGHLETSFEIVLFRSVCSSWRSVVPPQDQSRCLSI.

This chain is F-box protein At2g16300, found in Arabidopsis thaliana (Mouse-ear cress).